A 183-amino-acid chain; its full sequence is Capsid protein (183 aa).

Residues 136 to 183 form a disordered region; sequence NAPILSTLPETTVVRRRGRSPRRRTPSPRRRRSQSPRRRRSQSPASQC. Over residues 149–176 the composition is skewed to basic residues; the sequence is VRRRGRSPRRRTPSPRRRRSQSPRRRRS. A phosphoserine; by host mark is found at Ser155, Ser162, and Ser170. Residues 155-161 form a 1; half-length repeat; the sequence is SPRRRTP. The 3 X 8 AA repeats of S-P-R-R-R-[PR]-S-Q stretch occupies residues 155 to 177; that stretch reads SPRRRTPSPRRRRSQSPRRRRSQ. Positions 158-175 match the Bipartite nuclear localization signal motif; sequence RRTPSPRRRRSQSPRRRR. 2 tandem repeats follow at residues 162 to 169 and 170 to 177. Residues 177-183 form an RNA binding region; that stretch reads QSPASQC.

It belongs to the orthohepadnavirus core antigen family. In terms of assembly, homodimerizes, then multimerizes. Interacts with cytosol exposed regions of viral L glycoprotein present in the reticulum-to-Golgi compartment. Interacts with human FLNB. Phosphorylated form interacts with host importin alpha; this interaction depends on the exposure of the NLS, which itself depends upon genome maturation and/or phosphorylation of the capsid protein. Interacts with host NUP153. In terms of processing, phosphorylated by host SRPK1, SRPK2, and maybe protein kinase C or GAPDH. Phosphorylation is critical for pregenomic RNA packaging. Protein kinase C phosphorylation is stimulated by HBx protein and may play a role in transport of the viral genome to the nucleus at the late step during the viral replication cycle.

It localises to the virion. It is found in the host cytoplasm. Functionally, self assembles to form an icosahedral capsid. Most capsids appear to be large particles with an icosahedral symmetry of T=4 and consist of 240 copies of capsid protein, though a fraction forms smaller T=3 particles consisting of 180 capsid proteins. Entering capsids are transported along microtubules to the nucleus. Phosphorylation of the capsid is thought to induce exposure of nuclear localization signal in the C-terminal portion of the capsid protein that allows binding to the nuclear pore complex via the importin (karyopherin-) alpha and beta. Capsids are imported in intact form through the nuclear pore into the nuclear basket, where it probably binds NUP153. Only capsids that contain the mature viral genome can release the viral DNA and capsid protein into the nucleoplasm. Immature capsids get stuck in the basket. Capsids encapsulate the pre-genomic RNA and the P protein. Pre-genomic RNA is reverse-transcribed into DNA while the capsid is still in the cytoplasm. The capsid can then either be directed to the nucleus, providing more genomes for transcription, or bud through the endoplasmic reticulum to provide new virions. This is Capsid protein from Hylobatidae (gibbons).